Reading from the N-terminus, the 61-residue chain is Metallothionein-1M (61 aa).

The interval 1-29 is beta; the sequence is MDPNCSCTTGVSCACTGSCTCKECKCTSC. The a divalent metal cation site is built by Cys5, Cys7, Cys13, Cys15, Cys19, Cys21, Cys24, Cys26, Cys29, Cys33, Cys34, Cys36, Cys37, Cys41, Cys44, Cys48, Cys50, Cys57, Cys59, and Cys60. Positions 30 to 61 are alpha; that stretch reads KKSCCSCCPVGCAKCAHGCVCKGTLENCSCCA.

The protein belongs to the metallothionein superfamily. Type 1 family. In terms of assembly, monomer.

Functionally, metallothioneins have a high content of cysteine residues that bind various heavy metals; these proteins are transcriptionally regulated by both heavy metals and glucocorticoids. This Homo sapiens (Human) protein is Metallothionein-1M (MT1M).